The chain runs to 493 residues: Cobyric acid synthase (493 aa).

In terms of domain architecture, GATase cobBQ-type spans 260 to 427 (RLSVAAIRLP…RHGYLQDDPA (168 aa)). Histidine 419 is an active-site residue.

It belongs to the CobB/CobQ family. CobQ subfamily.

It functions in the pathway cofactor biosynthesis; adenosylcobalamin biosynthesis. Functionally, catalyzes amidations at positions B, D, E, and G on adenosylcobyrinic A,C-diamide. NH(2) groups are provided by glutamine, and one molecule of ATP is hydrogenolyzed for each amidation. This chain is Cobyric acid synthase, found in Corynebacterium efficiens (strain DSM 44549 / YS-314 / AJ 12310 / JCM 11189 / NBRC 100395).